We begin with the raw amino-acid sequence, 198 residues long: Beta-crystallin A1 (198 aa).

An N-terminal arm region spans residues 1–13 (MAQINPLPVPLGP). 2 consecutive Beta/gamma crystallin 'Greek key' domains span residues 14–53 (WKIT…KVEC) and 54–100 (GGWI…RPIC). A connecting peptide region spans residues 101–106 (SANHKE). Beta/gamma crystallin 'Greek key' domains follow at residues 107 to 148 (SKLV…KVQC) and 149 to 197 (GSWV…RRIQ).

It belongs to the beta/gamma-crystallin family. As to quaternary structure, homo/heterodimer, or complexes of higher-order. The structure of beta-crystallin oligomers seems to be stabilized through interactions between the N-terminal arms.

Crystallins are the dominant structural components of the vertebrate eye lens. This Rana temporaria (European common frog) protein is Beta-crystallin A1.